The sequence spans 323 residues: Olfactory receptor 5P58 (323 aa).

The Extracellular segment spans residues 1–28 (MAFLEDGNHTAVTEFILVGLTDDPVLKV). N-linked (GlcNAc...) asparagine glycosylation occurs at asparagine 8. Residues 29 to 49 (ILFTIILCIYLVTVSGNLSTI) form a helical membrane-spanning segment. Topologically, residues 50-57 (LLIRVSSQ) are cytoplasmic. Residues 58–78 (LHHPMYFFLSHLASVDLGYSS) traverse the membrane as a helical segment. Over 79-102 (SVTPNMLINFLAENNTISYIGCSI) the chain is Extracellular. A glycan (N-linked (GlcNAc...) asparagine) is linked at asparagine 92. A disulfide bond links cysteine 100 and cysteine 192. The helical transmembrane segment at 103–123 (QFGSATFFGVLECFLLAVMAY) threads the bilayer. Residues 124-136 (DRFVAICNPLLYS) lie on the Cytoplasmic side of the membrane. The chain crosses the membrane as a helical span at residues 137 to 157 (IKMSTQVCVKLVVGSYIGSSL). Residues 158–199 (NASFVTVSIFNLLFCGPNKINHFFCDFDPLIELSCSDVSVPV) are Extracellular-facing. A helical transmembrane segment spans residues 200-220 (AVTSCSAGLITMITVFVIAVS). At 221 to 240 (YTYILITVLKMRSTEGRHKA) the chain is on the cytoplasmic side. Residues 241-261 (FSTCTSHLTAVTLFYGTVTFI) form a helical membrane-spanning segment. Topologically, residues 262 to 274 (YVMPKSNYSTDQN) are extracellular. An N-linked (GlcNAc...) asparagine glycan is attached at asparagine 268. Residues 275–295 (KVVSVFYMVVIPMLNPLIYSL) traverse the membrane as a helical segment. At 296-323 (RNNEIKGALKRQLGKKIFSQSNILFCKS) the chain is on the cytoplasmic side.

It belongs to the G-protein coupled receptor 1 family.

It localises to the cell membrane. Its function is as follows. Potential odorant receptor. The chain is Olfactory receptor 5P58 from Mus musculus (Mouse).